The sequence spans 556 residues: PTS system fructose-specific EIIB'BC component (556 aa).

PTS EIIB type-2 domains are found at residues 1-85 (MKLF…LANG) and 106-201 (IVAV…KAFK). C112 (phosphocysteine intermediate; for EIIB activity) is an active-site residue. C112 carries the phosphocysteine; by EIIA modification. The PTS EIIC type-2 domain occupies 224–556 (VYKHLMTGVS…AIIKSKNNAE (333 aa)). The next 10 membrane-spanning stretches (helical) occupy residues 237 to 257 (PLVV…FNVI), 275 to 295 (SGVA…FSIA), 302 to 322 (VGLI…GGII), 324 to 344 (GFLA…PASL), 349 to 369 (PILI…IYLI), 390 to 410 (VNAI…MGGP), 431 to 451 (MAAA…ATWI), 468 to 488 (FVLG…ADPI), 490 to 510 (VIIS…GLNI), and 529 to 549 (LKYL…YAII).

The protein localises to the cell inner membrane. It carries out the reaction D-fructose(out) + N(pros)-phospho-L-histidyl-[protein] = D-fructose 1-phosphate(in) + L-histidyl-[protein]. The phosphoenolpyruvate-dependent sugar phosphotransferase system (sugar PTS), a major carbohydrate active transport system, catalyzes the phosphorylation of incoming sugar substrates concomitantly with their translocation across the cell membrane. The enzyme II FruAB PTS system is involved in fructose transport. The chain is PTS system fructose-specific EIIB'BC component from Haemophilus influenzae (strain ATCC 51907 / DSM 11121 / KW20 / Rd).